Consider the following 347-residue polypeptide: Endophilin-A3 (347 aa).

Residues 1–21 form a membrane-binding amphipathic helix region; it reads MSVAGLKKQFHKASQLFSEKI. The 232-residue stretch at 18–249 folds into the BAR domain; that stretch reads SEKISGAEGT…LELRISLASK (232 aa). The segment at 60–87 is required for dimerization upon membrane association; the sequence is PNPAYRAKLGMLNTVSKLRGQVKATGYP. Residues 180-201 adopt a coiled-coil conformation; sequence EEEIRQAVEKFEESKELAERSM. An interaction with ARC region spans residues 218–254; the sequence is FVEAALDYHRQSTEILQELQSKLELRISLASKVPKRE. A disordered region spans residues 255–288; sequence FMPKPVNMSSTDANGVGPSSSSKTPGTDTPADQP. Residues 261 to 281 show a composition bias toward polar residues; the sequence is NMSSTDANGVGPSSSSKTPGT. An SH3 domain is found at 285 to 344; the sequence is ADQPCCRGLYDFEPENEGELGFKEGDIITLTNQIDENWYEGMLRGESGFFPINYVEVIVP.

It belongs to the endophilin family. In terms of assembly, interacts with ARC, DNM1, SGIP1, SYNJ1 and DYDC1. Interacts with FASLG. Interacts with ATXN2. Interacts with BIN2.

It localises to the cytoplasm. The protein localises to the early endosome membrane. Functionally, implicated in endocytosis. May recruit other proteins to membranes with high curvature. This Mus musculus (Mouse) protein is Endophilin-A3 (Sh3gl3).